A 186-amino-acid polypeptide reads, in one-letter code: Ribosome-recycling factor (186 aa).

The protein belongs to the RRF family.

The protein resides in the cytoplasm. In terms of biological role, responsible for the release of ribosomes from messenger RNA at the termination of protein biosynthesis. May increase the efficiency of translation by recycling ribosomes from one round of translation to another. In Methylocella silvestris (strain DSM 15510 / CIP 108128 / LMG 27833 / NCIMB 13906 / BL2), this protein is Ribosome-recycling factor.